We begin with the raw amino-acid sequence, 130 residues long: Small ribosomal subunit protein uS11 (130 aa).

It belongs to the universal ribosomal protein uS11 family. As to quaternary structure, part of the 30S ribosomal subunit. Interacts with proteins S7 and S18. Binds to IF-3.

Its function is as follows. Located on the platform of the 30S subunit, it bridges several disparate RNA helices of the 16S rRNA. Forms part of the Shine-Dalgarno cleft in the 70S ribosome. The sequence is that of Small ribosomal subunit protein uS11 from Parasynechococcus marenigrum (strain WH8102).